The following is a 376-amino-acid chain: MSKRDFYEVLGVPKNASDDEIKKAYRKLAMKYHPDRNQGDAAKPAEEKFKEAKEAYEILSDAQKRAAYDQYGHAGVDPNMRGGMGGAEGFGGFAEAFGDIFGDMFGGARGRGGRQVYRGNDLSYAMEITLEEAAKGKEAQIRIPSWESCETCHGSGAKPGTSAKTCGTCQGSGTVQMRQGFFSVQQTCPHCRGTGKIIPEPCTACHGQGRVKKQKTLEVKIPAGIDDGMRIRSTGNGEPGTNGGPPGDLYIEIRIKKHDIFERDGDDLHCQVPVSFITAALGGEIEVPTLQGKAAIDIPEGTQAGKQFRLRGKGIKGVRSSYPGDLYCHIIVETPVKLTEHQRKLLKELDESLKKGGAKHSPSTESWTDRLKSFFS.

The J domain occupies 5–72 (DFYEVLGVPK…QKRAAYDQYG (68 aa)). A CR-type zinc finger spans residues 136-214 (GKEAQIRIPS…CHGQGRVKKQ (79 aa)). Zn(2+) contacts are provided by C149, C152, C166, C169, C188, C191, C202, and C205. CXXCXGXG motif repeat units follow at residues 149-156 (CETCHGSG), 166-173 (CGTCQGSG), 188-195 (CPHCRGTG), and 202-209 (CTACHGQG). Disordered regions lie at residues 227 to 246 (DGMR…GGPP) and 352 to 376 (SLKK…SFFS). Positions 237 to 246 (GEPGTNGGPP) are enriched in gly residues. The span at 367–376 (WTDRLKSFFS) shows a compositional bias: basic and acidic residues.

The protein belongs to the DnaJ family. In terms of assembly, homodimer. It depends on Zn(2+) as a cofactor.

It localises to the cytoplasm. Functionally, participates actively in the response to hyperosmotic and heat shock by preventing the aggregation of stress-denatured proteins and by disaggregating proteins, also in an autonomous, DnaK-independent fashion. Unfolded proteins bind initially to DnaJ; upon interaction with the DnaJ-bound protein, DnaK hydrolyzes its bound ATP, resulting in the formation of a stable complex. GrpE releases ADP from DnaK; ATP binding to DnaK triggers the release of the substrate protein, thus completing the reaction cycle. Several rounds of ATP-dependent interactions between DnaJ, DnaK and GrpE are required for fully efficient folding. Also involved, together with DnaK and GrpE, in the DNA replication of plasmids through activation of initiation proteins. The polypeptide is Chaperone protein DnaJ (Acidovorax sp. (strain JS42)).